The primary structure comprises 432 residues: N-acylneuraminate cytidylyltransferase (432 aa).

An N-acetylmethionine modification is found at methionine 1. Residues 1–38 are disordered; the sequence is MDALEKGAVTSGPAPRGRPSRGRPPKLQRSRGAGRGLE. Residues 15–31 carry the BC1 motif motif; the sequence is PRGRPSRGRPPKLQRSR. Over residues 18–29 the composition is skewed to basic residues; sequence RPSRGRPPKLQR. An omega-N-methylarginine mark is found at arginine 35 and arginine 50. Substrate contacts are provided by arginine 50, asparagine 60, arginine 109, serine 118, serine 120, and glutamine 141. Residues 198–204 carry the BC2 motif motif; that stretch reads KRPRRQD. The active site involves arginine 199. A BC3 motif motif is present at residues 267–274; that stretch reads KEKLKEIK.

This sequence belongs to the CMP-NeuNAc synthase family. Homotetramer; the active enzyme is formed by a dimer of dimers. As to expression, highly expressed in brain and heart, and at intermediate level muscle and liver.

The protein resides in the nucleus. It catalyses the reaction an N-acylneuraminate + CTP = a CMP-N-acyl-beta-neuraminate + diphosphate. Its pathway is amino-sugar metabolism; N-acetylneuraminate metabolism. Functionally, catalyzes the activation of N-acetylneuraminic acid (NeuNAc) to cytidine 5'-monophosphate N-acetylneuraminic acid (CMP-NeuNAc), a substrate required for the addition of sialic acid. Has some activity toward NeuNAc, N-glycolylneuraminic acid (Neu5Gc) or 2-keto-3-deoxy-D-glycero-D-galacto-nononic acid (KDN). The sequence is that of N-acylneuraminate cytidylyltransferase (Cmas) from Mus musculus (Mouse).